Reading from the N-terminus, the 494-residue chain is Sphingosine-1-phosphate transporter MFSD2B (494 aa).

Pro residues predominate over residues 1–12; sequence MSVPHGPTPAPV. Positions 1 to 26 are disordered; that stretch reads MSVPHGPTPAPVAEPHTQEPGSDKRD. Helical transmembrane passes span 103–123, 140–160, 179–199, 223–243, 277–297, 310–330, 339–359, 360–380, 402–422, and 449–469; these read LMPW…FLWF, CLFQ…TMIL, MAGT…AHGS, IAAA…CLGV, VVSF…LVLF, NLVL…EWVL, AFGI…PSAP, VAYV…LLPW, TIFY…ALGI, and VLIG…LLVG. A disordered region spans residues 473-494; that stretch reads KMPRQDTSSQLSLRRRTSYSLA. The span at 485-494 shows a compositional bias: basic residues; that stretch reads LRRRTSYSLA.

Belongs to the major facilitator superfamily. In terms of tissue distribution, widely expressed with highest expression in spleen, lung and testis. Predominantly expressed in erythroid lineages giving rise to erythrocytes and platelets, but absent in lymphoid lineages.

Its subcellular location is the cell membrane. The catalysed reaction is sphing-4-enine 1-phosphate(in) = sphing-4-enine 1-phosphate(out). The enzyme catalyses sphinganine 1-phosphate(in) = sphinganine 1-phosphate(out). It catalyses the reaction sphinga-4E,14Z-dienine-1-phosphate(in) = sphinga-4E,14Z-dienine-1-phosphate(out). Lipid transporter that specifically mediates export of sphingosine-1-phosphate in red blood cells and platelets. Sphingosine-1-phosphate is a signaling sphingolipid and its export from red blood cells into in the plasma is required for red blood cell morphology. Sphingosine-1-phosphate export from platelets is required for platelet aggregation and thrombus formation. Mediates the export of different sphingosine-1-phosphate (S1P) species, including S1P(d18:0) (sphinganine 1-phosphate), S1P (d18:1) (sphing-4-enine 1-phosphate) and S1P (d18:2) (sphinga-4E,14Z-dienine-1-phosphate). Release of sphingosine-1-phosphate is facilitated by a proton gradient. In contrast, cations, such as sodium, are not required to drive sphingosine-1-phosphate transport. In addition to export, also able to mediate S1P import. Does not transport lysophosphatidylcholine (LPC). The protein is Sphingosine-1-phosphate transporter MFSD2B of Mus musculus (Mouse).